Consider the following 425-residue polypeptide: MFVDVARIYVKGGDGGRGSNSVRREKYVPQGGPWGGDGGRGGDVVFVVDPGLNTLVDFKYQKHFKAERGEHGGPKGMHGRKGEDLVIKVPPGTVVKDDDTGEVLFDLVEPGQRAVVARGGRGGRGNMRFATPTNKCPTFYEKGEPGEERWLLLELKVVADVGLVGFPNAGKSTFLSAVSAARPKIANYPFTTLTPVLGVVDLGEGRSFVIADIPGLIEGAHQGVGLGHEFLRHVERTKVLIHVLDGAGTEGRDPLSDFDVIHNELRAYNPELAARPTLVAFNKMDLPDARENLPRVREALEKRGYRVFPISGATREGFRPLLEAAYDLIRQWVPPEPAAPEAEMVYRPKEEGWRIYKYGGVWHVEGKEIERLVAMTMWENDEAVARFLRILRLKGVEQALREAGAEDGDTVRVCDIEFELMADPV.

Positions 1–158 (MFVDVARIYV…RWLLLELKVV (158 aa)) constitute an Obg domain. Residues 159–330 (ADVGLVGFPN…LLEAAYDLIR (172 aa)) form the OBG-type G domain. GTP contacts are provided by residues 165 to 172 (GFPNAGKS), 190 to 194 (FTTLT), 212 to 215 (DIPG), 282 to 285 (NKMD), and 311 to 313 (SGA). Residues S172 and T192 each coordinate Mg(2+). In terms of domain architecture, OCT spans 345 to 422 (VYRPKEEGWR…VCDIEFELMA (78 aa)).

Belongs to the TRAFAC class OBG-HflX-like GTPase superfamily. OBG GTPase family. Monomer. Requires Mg(2+) as cofactor.

Its subcellular location is the cytoplasm. In terms of biological role, an essential GTPase which binds GTP, GDP and possibly (p)ppGpp with moderate affinity, with high nucleotide exchange rates and a fairly low GTP hydrolysis rate. Plays a role in control of the cell cycle, stress response, ribosome biogenesis and in those bacteria that undergo differentiation, in morphogenesis control. The chain is GTPase Obg from Symbiobacterium thermophilum (strain DSM 24528 / JCM 14929 / IAM 14863 / T).